Reading from the N-terminus, the 379-residue chain is Chaperone protein DnaJ (379 aa).

One can recognise a J domain in the interval 5–69; it reads EYYERLGVDK…QKRAAYDQYG (65 aa). The CR-type zinc finger occupies 141–223; that stretch reads GVEKQVKYNR…CHGSGHEKVA (83 aa). Residues Cys-154, Cys-157, Cys-171, Cys-174, Cys-197, Cys-200, Cys-211, and Cys-214 each contribute to the Zn(2+) site. 4 CXXCXGXG motif repeats span residues 154 to 161, 171 to 178, 197 to 204, and 211 to 218; these read CHTCGGSG, CHKCGGRG, CDVCNGTG, and CETCHGSG.

This sequence belongs to the DnaJ family. Homodimer. It depends on Zn(2+) as a cofactor.

The protein resides in the cytoplasm. Functionally, participates actively in the response to hyperosmotic and heat shock by preventing the aggregation of stress-denatured proteins and by disaggregating proteins, also in an autonomous, DnaK-independent fashion. Unfolded proteins bind initially to DnaJ; upon interaction with the DnaJ-bound protein, DnaK hydrolyzes its bound ATP, resulting in the formation of a stable complex. GrpE releases ADP from DnaK; ATP binding to DnaK triggers the release of the substrate protein, thus completing the reaction cycle. Several rounds of ATP-dependent interactions between DnaJ, DnaK and GrpE are required for fully efficient folding. Also involved, together with DnaK and GrpE, in the DNA replication of plasmids through activation of initiation proteins. In Lactococcus lactis subsp. lactis (strain IL1403) (Streptococcus lactis), this protein is Chaperone protein DnaJ.